Here is a 175-residue protein sequence, read N- to C-terminus: Probable chemoreceptor glutamine deamidase CheD (175 aa).

Belongs to the CheD family.

It catalyses the reaction L-glutaminyl-[protein] + H2O = L-glutamyl-[protein] + NH4(+). Its function is as follows. Probably deamidates glutamine residues to glutamate on methyl-accepting chemotaxis receptors (MCPs), playing an important role in chemotaxis. The protein is Probable chemoreceptor glutamine deamidase CheD of Jannaschia sp. (strain CCS1).